The chain runs to 485 residues: Probable cobyric acid synthase (485 aa).

Positions 250 to 435 (EIEVAVIRLP…LHGLFDNRNI (186 aa)) constitute a GATase cobBQ-type domain. Catalysis depends on Cys328, which acts as the Nucleophile. Residue His427 is part of the active site.

It belongs to the CobB/CobQ family. CobQ subfamily.

The protein operates within cofactor biosynthesis; adenosylcobalamin biosynthesis. Its function is as follows. Catalyzes amidations at positions B, D, E, and G on adenosylcobyrinic A,C-diamide. NH(2) groups are provided by glutamine, and one molecule of ATP is hydrogenolyzed for each amidation. This chain is Probable cobyric acid synthase, found in Methanosarcina mazei (strain ATCC BAA-159 / DSM 3647 / Goe1 / Go1 / JCM 11833 / OCM 88) (Methanosarcina frisia).